A 414-amino-acid chain; its full sequence is Light-independent protochlorophyllide reductase subunit N (414 aa).

[4Fe-4S] cluster is bound by residues Cys16, Cys41, and Cys98.

The protein belongs to the BchN/ChlN family. Protochlorophyllide reductase is composed of three subunits; BchL, BchN and BchB. Forms a heterotetramer of two BchB and two BchN subunits. It depends on [4Fe-4S] cluster as a cofactor.

The catalysed reaction is chlorophyllide a + oxidized 2[4Fe-4S]-[ferredoxin] + 2 ADP + 2 phosphate = protochlorophyllide a + reduced 2[4Fe-4S]-[ferredoxin] + 2 ATP + 2 H2O. The protein operates within porphyrin-containing compound metabolism; bacteriochlorophyll biosynthesis (light-independent). Functionally, component of the dark-operative protochlorophyllide reductase (DPOR) that uses Mg-ATP and reduced ferredoxin to reduce ring D of protochlorophyllide (Pchlide) to form chlorophyllide a (Chlide). This reaction is light-independent. The NB-protein (BchN-BchB) is the catalytic component of the complex. This chain is Light-independent protochlorophyllide reductase subunit N, found in Roseiflexus castenholzii (strain DSM 13941 / HLO8).